The sequence spans 34 residues: uncharacterized protein (34 aa).

This is an uncharacterized protein from Treponema pallidum (strain Nichols).